The sequence spans 509 residues: Glycerol kinase (509 aa).

Residue T17 coordinates ADP. 3 residues coordinate ATP: T17, T18, and S19. T17 is a sn-glycerol 3-phosphate binding site. R21 lines the ADP pocket. Residues R87, E88, Y139, and D256 each coordinate sn-glycerol 3-phosphate. R87, E88, Y139, D256, and Q257 together coordinate glycerol. Residues T278 and G322 each coordinate ADP. ATP-binding residues include T278, G322, Q326, and A423. The ADP site is built by A423 and N427.

Belongs to the FGGY kinase family.

It carries out the reaction glycerol + ATP = sn-glycerol 3-phosphate + ADP + H(+). The protein operates within polyol metabolism; glycerol degradation via glycerol kinase pathway; sn-glycerol 3-phosphate from glycerol: step 1/1. Its activity is regulated as follows. Inhibited by fructose 1,6-bisphosphate (FBP). In terms of biological role, key enzyme in the regulation of glycerol uptake and metabolism. Catalyzes the phosphorylation of glycerol to yield sn-glycerol 3-phosphate. The protein is Glycerol kinase of Corynebacterium glutamicum (strain R).